We begin with the raw amino-acid sequence, 404 residues long: UBP1-associated protein 2C (404 aa).

A disordered region spans residues 1–29 (MDMMKKRKLDENGNGLNTNGGGTIGPTRL). RRM domains follow at residues 75–152 (RKLF…LAAS) and 167–248 (RKIY…GKKG). Disordered regions lie at residues 246–270 (KKGGKPGMPQAQDGGSGHGHVHGEG) and 344–404 (GSGQ…PPNY).

As to expression, expressed in root apical and lateral meristems, young leaves and embryos.

It localises to the nucleus. Its function is as follows. Heterogeneous nuclear ribonucleoprotein (hnRNP)-like protein that acts as a component of a complex regulating the turnover of mRNAs in the nucleus. Binds with high affinity to RNA molecules that contain U-rich sequences in 3'-UTRs. May function in complex with UBP1 and contribute to the stabilization of mRNAs in the nucleus. The sequence is that of UBP1-associated protein 2C (UBA2C) from Arabidopsis thaliana (Mouse-ear cress).